The sequence spans 266 residues: UPF0294 protein YafD (266 aa).

The protein belongs to the UPF0294 family.

Its subcellular location is the cytoplasm. The protein is UPF0294 protein YafD of Salmonella newport (strain SL254).